A 367-amino-acid chain; its full sequence is Cellular tumor antigen p53 (367 aa).

Positions 1-47 are transcription activation (acidic); the sequence is MEEENISLPLSQDTFQDLWDNVSAPPISTIQTAALENEAWPAERQMN. The DNA-binding element occupies 86-273; sequence DYPGEYGFKL…KTEETNSTKM (188 aa). Positions 160, 163, 219, and 223 each coordinate Zn(2+). Residues 254–261 form an interaction with DNA region; that stretch reads RVCACPGR. Residues 262–279 are compositionally biased toward basic and acidic residues; it reads DRKTEETNSTKMQNDAKD. 2 disordered regions span residues 262-306 and 332-367; these read DRKT…AEED and DLLE…SDSD. The Bipartite nuclear localization signal signature appears at 282–300; that stretch reads KRKSVPTPDSTTIKKSKTA. Residues 291–302 show a composition bias toward low complexity; the sequence is STTIKKSKTASS. Residues 308–337 are oligomerization; that stretch reads NEVYTLQIRGRKRYEMLKKINDGLDLLENK. The short motif at 322–333 is the Nuclear export signal element; it reads EMLKKINDGLDL. The basic (repression of DNA-binding) stretch occupies residues 342–363; that stretch reads ATHRPDGPIPPSGKRLLHRGEK.

It belongs to the p53 family. Binds DNA as a homotetramer. Zn(2+) serves as cofactor.

The protein localises to the cytoplasm. The protein resides in the nucleus. Functionally, multifunctional transcription factor that induces cell cycle arrest, DNA repair or apoptosis upon binding to its target DNA sequence. Acts as a tumor suppressor in many tumor types; induces growth arrest or apoptosis depending on the physiological circumstances and cell type. Negatively regulates cell division by controlling expression of a set of genes required for this process. One of the activated genes is an inhibitor of cyclin-dependent kinases. Apoptosis induction seems to be mediated either by stimulation of BAX and FAS antigen expression, or by repression of Bcl-2 expression. This chain is Cellular tumor antigen p53 (tp53), found in Tetraodon miurus (Congo puffer).